The chain runs to 402 residues: N-acetyltransferase Eis (402 aa).

One can recognise an N-acetyltransferase domain in the interval 3-154 (VTLCSPTEDD…RFARFHADAP (152 aa)). Acetyl-CoA contacts are provided by residues 85-87 (VAV), 93-98 (RRGLLR), and 121-122 (SE). Y126 functions as the Proton donor in the catalytic mechanism. F402 functions as the Proton acceptor; via carboxylate in the catalytic mechanism.

It belongs to the acetyltransferase Eis family. Homohexamer; trimer of dimers.

The protein resides in the secreted. It is found in the host cytoplasmic vesicle. The protein localises to the host phagosome. It localises to the extracellular vesicle. Its subcellular location is the bacterial extracellular vesicle. The protein resides in the host extracellular space. It catalyses the reaction L-lysyl-[protein] + acetyl-CoA = N(6)-acetyl-L-lysyl-[protein] + CoA + H(+). In terms of biological role, effector that is released into the host cell and affects host immune responses. Acts as an acetyltransferase that acetylates lysine residues of host proteins. The sequence is that of N-acetyltransferase Eis from Mycobacterium bovis (strain BCG / Pasteur 1173P2).